We begin with the raw amino-acid sequence, 220 residues long: MSFHPALIIVDVQNDFVHPVYISSGESALEVVPVINRLLENDYKWDTVIATKDVHPKDHLSFTTSHSSTPKPSGTVVNIEAYGHVYKQTLWNSHCVENTPGCEFPDSLNGDRIEFVIPKGSDRLVESYSGFYDAIGRDNGLKAILDKKGITDVFIAGVATDICVKETALHARHWYNTYIISEAVKGSSTESHNQAIKDFRDAKIEVISEKDPILQSVRKV.

D11 is a catalytic residue. Zn(2+) contacts are provided by D53, H55, and H94. Residue K119 is part of the active site. The Nucleophile role is filled by C163.

Belongs to the isochorismatase family.

It is found in the cytoplasm. It localises to the nucleus. The protein resides in the peroxisome. It catalyses the reaction nicotinamide + H2O = nicotinate + NH4(+). The protein operates within cofactor biosynthesis; nicotinate biosynthesis; nicotinate from nicotinamide: step 1/1. Catalyzes the deamidation of nicotinamide, an early step in the NAD(+) salvage pathway. This is Nicotinamidase (pnc1) from Schizosaccharomyces pombe (strain 972 / ATCC 24843) (Fission yeast).